The following is a 494-amino-acid chain: 3-octaprenyl-4-hydroxybenzoate carboxy-lyase (494 aa).

Asn172 serves as a coordination point for Mn(2+). Prenylated FMN is bound by residues 175–177, 189–191, and 194–195; these read IYR, RWL, and RG. Glu238 lines the Mn(2+) pocket. Asp294 acts as the Proton donor in catalysis.

Belongs to the UbiD family. In terms of assembly, homohexamer. It depends on prenylated FMN as a cofactor. Mn(2+) is required as a cofactor.

The protein resides in the cell membrane. The catalysed reaction is a 4-hydroxy-3-(all-trans-polyprenyl)benzoate + H(+) = a 2-(all-trans-polyprenyl)phenol + CO2. It participates in cofactor biosynthesis; ubiquinone biosynthesis. In terms of biological role, catalyzes the decarboxylation of 3-octaprenyl-4-hydroxy benzoate to 2-octaprenylphenol, an intermediate step in ubiquinone biosynthesis. The protein is 3-octaprenyl-4-hydroxybenzoate carboxy-lyase of Herminiimonas arsenicoxydans.